The primary structure comprises 334 residues: Ribosomal RNA small subunit methyltransferase H (334 aa).

S-adenosyl-L-methionine-binding positions include 53 to 55 (GGH), aspartate 72, phenylalanine 99, aspartate 122, and histidine 129.

This sequence belongs to the methyltransferase superfamily. RsmH family.

It localises to the cytoplasm. The catalysed reaction is cytidine(1402) in 16S rRNA + S-adenosyl-L-methionine = N(4)-methylcytidine(1402) in 16S rRNA + S-adenosyl-L-homocysteine + H(+). In terms of biological role, specifically methylates the N4 position of cytidine in position 1402 (C1402) of 16S rRNA. In Leptospira interrogans serogroup Icterohaemorrhagiae serovar Lai (strain 56601), this protein is Ribosomal RNA small subunit methyltransferase H.